The chain runs to 465 residues: UDP-N-acetylmuramate--L-alanine ligase (465 aa).

Residue 114 to 120 (GTHGKTT) participates in ATP binding.

This sequence belongs to the MurCDEF family.

The protein localises to the cytoplasm. The enzyme catalyses UDP-N-acetyl-alpha-D-muramate + L-alanine + ATP = UDP-N-acetyl-alpha-D-muramoyl-L-alanine + ADP + phosphate + H(+). It participates in cell wall biogenesis; peptidoglycan biosynthesis. Its function is as follows. Cell wall formation. This Chelativorans sp. (strain BNC1) protein is UDP-N-acetylmuramate--L-alanine ligase.